The chain runs to 214 residues: DELTA-actitoxin-Aeq1b (214 aa).

An N-terminal signal peptide occupies residues Met1 to Ala19. The propeptide occupies Leu20 to Arg35. A plays an important role in the hemolytic activity region spans residues Ala38–Ala47. An N-terminal region region spans residues Gly46–Ser65. 7 residues coordinate phosphocholine: Ser89, Val122, Ser140, Pro142, Tyr168, Tyr172, and Tyr173. The tract at residues Ser140 to Lys155 is trp-rich region, which is important for the binding to lipid membrane. The short motif at Arg179–Asp181 is the Cell attachment site, crucial for protein stability element.

Belongs to the actinoporin family. Sea anemone subfamily. As to quaternary structure, octamer or nonamer in membranes. Monomer in the soluble state.

Its subcellular location is the secreted. It localises to the nematocyst. The protein localises to the target cell membrane. Its function is as follows. Pore-forming protein that forms cations-selective hydrophilic pores of around 1 nm and causes cytolysis. Pore formation is a multi-step process that involves specific recognition of membrane sphingomyelin (but neither cholesterol nor phosphatidylcholine) using aromatic rich region and adjacent phosphocholine (POC) binding site, firm binding to the membrane (mainly driven by hydrophobic interactions) accompanied by the transfer of the N-terminal region to the lipid-water interface and finally pore formation after oligomerization of monomers. The polypeptide is DELTA-actitoxin-Aeq1b (Actinia equina (Beadlet anemone)).